The chain runs to 284 residues: 2-dehydro-3-deoxyphosphooctonate aldolase (284 aa).

This sequence belongs to the KdsA family.

The protein localises to the cytoplasm. The enzyme catalyses D-arabinose 5-phosphate + phosphoenolpyruvate + H2O = 3-deoxy-alpha-D-manno-2-octulosonate-8-phosphate + phosphate. It participates in carbohydrate biosynthesis; 3-deoxy-D-manno-octulosonate biosynthesis; 3-deoxy-D-manno-octulosonate from D-ribulose 5-phosphate: step 2/3. Its pathway is bacterial outer membrane biogenesis; lipopolysaccharide biosynthesis. This chain is 2-dehydro-3-deoxyphosphooctonate aldolase, found in Escherichia coli O157:H7.